A 33-amino-acid chain; its full sequence is uncharacterized protein (33 aa).

Residues 1–33 (MGSVIKKRRKRMSKKKHRKLLRRTRVQRRKLGK) are disordered.

This is an uncharacterized protein from Mycobacterium tuberculosis (strain CDC 1551 / Oshkosh).